Here is a 108-residue protein sequence, read N- to C-terminus: Nucleoid-associated protein PSHAa1202 (108 aa).

Disordered stretches follow at residues 1 to 20 (MFKGGMGNMMKQAQQMQDRM) and 87 to 108 (TQERMGKVTGGMQLPPGMKMPF).

The protein belongs to the YbaB/EbfC family. Homodimer.

It localises to the cytoplasm. The protein localises to the nucleoid. In terms of biological role, binds to DNA and alters its conformation. May be involved in regulation of gene expression, nucleoid organization and DNA protection. In Pseudoalteromonas translucida (strain TAC 125), this protein is Nucleoid-associated protein PSHAa1202.